A 331-amino-acid polypeptide reads, in one-letter code: Large ribosomal subunit protein uL3 (331 aa).

This sequence belongs to the universal ribosomal protein uL3 family. In terms of assembly, part of the 50S ribosomal subunit. Forms a cluster with proteins L14 and L24e.

Its function is as follows. One of the primary rRNA binding proteins, it binds directly near the 3'-end of the 23S rRNA, where it nucleates assembly of the 50S subunit. This chain is Large ribosomal subunit protein uL3, found in Thermoplasma volcanium (strain ATCC 51530 / DSM 4299 / JCM 9571 / NBRC 15438 / GSS1).